An 817-amino-acid chain; its full sequence is Myosin-A (817 aa).

The residue at position 19 (Ser19) is a Phosphoserine. The region spanning 97-771 (MSFGDIGLLN…GAKMLSKIQR (675 aa)) is the Myosin motor domain. Residue 191–198 (GESGAGKT) coordinates ATP. An actin-binding region spans residues 661–671 (PHFIRCIKPNE). Residues 773–817 (KLVEWENCVSVIEAAIMKYKHKQNVENNVSSLMRVQAHIRKRMVA) form a tail region.

The protein belongs to the TRAFAC class myosin-kinesin ATPase superfamily. Myosin family. Interacts with ACT1.

The protein resides in the cell membrane. Myosins are actin-based motor molecules with ATPase activity. Unconventional myosins serve in intracellular movements. Their highly divergent tails are presumed to bind to membranous compartments, which would be moved relative to actin filaments. The protein is Myosin-A of Plasmodium yoelii yoelii.